The chain runs to 1997 residues: MALLIHLKTVSELRGRGDRIAKVTFRGQSFYSRVLENCEDVADFDETFRWPVASSIDRNEMLEIQVFNYSKVFSNKLIGTFRMVLQKVVEESHVEVTDTLIDDNNAIIKTSLCVEVRYQATDGTVGSWDDGDFLGDESLQEEEKDSQETDGLLPGSRPSSRPPGEKSFRRAGRSVFSAMKLGKNRSHKEEPQRPDEPAVLEMEDLDHLAIRLGDGLDPDSVSLASVTALTTNVSNKRSKPDIKMEPSAGRPMDYQVSITVIEARQLVGLNMDPVVCVEVGDDKKYTSMKESTNCPYYNEYFVFDFHVSPDVMFDKIIKISVIHSKNLLRSGTLVGSFKMDVGTVYSQPEHQFHHKWAILSDPDDISSGLKGYVKCDVAVVGKGDNIKTPHKANETDEDDIEGNLLLPEGVPPERQWARFYVKIYRAEGLPRMNTSLMANVKKAFIGENKDLVDPYVQVFFAGQKGKTSVQKSSYEPLWNEQVVFTDLFPPLCKRMKVQIRDSDKVNDVAIGTHFIDLRKISNDGDKGFLPTLGPAWVNMYGSTRNYTLLDEHQDLNEGLGEGVSFRARLLLGLAVEIVDTSNPELTSSTEVQVEQATPISESCAGKMEEFFLFGAFLEASMIDRRNGDKPITFEVTIGNYGNEVDGLSRPQRPRPRKEPGDEEEVDLIQNASDDEAGDAGDLASVSSTPPMRPQVTDRNYFHLPYLERKPCIYIKSWWPDQRRRLYNANIMDHIADKLEEGLNDIQEMIKTEKSYPERRLRGVLEELSCGCCRFLSLADKDQGHSSRTRLDRERLKSCMRELENMGQQARMLRAQVKRHTVRDKLRLCQNFLQKLRFLADEPQHSIPDIFIWMMSNNKRVAYARVPSKDLLFSIVEEETGKDCAKVKTLFLKLPGKRGFGSAGWTVQAKVELYLWLGLSKQRKEFLCGLPCGFQEVKAAQGLGLHAFPPVSLVYTKKQAFQLRAHMYQARSLFAADSSGLSDPFARVFFINQSQCTEVLNETLCPTWDQMLVFDNLELYGEAHELRDDPPIIVIEIYDQDSMGKADFMGRTFAKPLVKMADEAYCPPRFPPQLEYYQIYRGNATAGDLLAAFELLQIGPAGKADLPPINGPVDVDRGPIMPVPMGIRPVLSKYRVEVLFWGLRDLKRVNLAQVDRPRVDIECAGKGVQSSLIHNYKKNPNFNTLVKWFEVDLPENELLHPPLNIRVVDCRAFGRYTLVGSHAVSSLRRFIYRPPDRSAPSWNTTVRLLRRCRVLCNGGSSSHSTGEVVVTMEPEVPIKKLETMVKLDATSEAVVKVDVAEEEKEKKKKKKGTAEEPEEEEPDESMLDWWSKYFASIDTMKEQLRQQEPSGIDLEEKEEVDNTEGLKGSMKGKEKARAAKEEKKKKTQSSGSGQGSEAPEKKKPKIDELKVYPKELESEFDNFEDWLHTFNLLRGKTGDDEDGSTEEERIVGRFKGSLCVYKVPLPEDVSREAGYDSTYGMFQGIPSNDPINVLVRVYVVRATDLHPADINGKADPYIAIRLGKTDIRDKENYISKQLNPVFGKSFDIEASFPMESMLTVAVYDWDLVGTDDLIGETKIDLENRFYSKHRATCGIAQTYSTHGYNIWRDPMKPSQILTRLCKDGKVDGPHFGPPGRVKVANRVFTGPSEIEDENGQRKPTDEHVALLALRHWEDIPRAGCRLVPEHVETRPLLNPDKPGIEQGRLELWVDMFPMDMPAPGTPLDISPRKPKKYELRVIIWNTDEVVLEDDDFFTGEKSSDIFVRGWLKGQQEDKQDTDVHYHSLTGEGNFNWRYLFPFDYLAAEEKIVISKKESMFSWDETEYKIPARLTLQIWDADHFSADDFLGAIELDLNRFPRGAKTAKQCTMEMATGEVDVPLVSIFKQKRVKGWWPLLARNENDEFELTGKVEAELHLLTAEEAEKNPVGLARNEPDPLEKPNRPDTSFIWFLNPLKSARYFLWHTYRWLLLKLLLLLLLLLLLALFLYSVPGYLVKKILGA.

Positions 1–98 (MALLIHLKTV…VEESHVEVTD (98 aa)) constitute a C2 1 domain. The Cytoplasmic segment spans residues 1-1963 (MALLIHLKTV…ARYFLWHTYR (1963 aa)). Positions 128 to 171 (WDDGDFLGDESLQEEEKDSQETDGLLPGSRPSSRPPGEKSFRRA) are disordered. A compositionally biased stretch (acidic residues) spans 129 to 145 (DDGDFLGDESLQEEEKD). 2 C2 domains span residues 236–357 (KRSK…HKWA) and 400–531 (IEGN…FLPT). Positions 642 to 694 (NEVDGLSRPQRPRPRKEPGDEEEVDLIQNASDDEAGDAGDLASVSSTPPMRPQ) are disordered. The segment covering 660–678 (GDEEEVDLIQNASDDEAGD) has biased composition (acidic residues). Positions 792–821 (RERLKSCMRELENMGQQARMLRAQVKRHTV) form a coiled coil. C2 domains are found at residues 944 to 1069 (LHAF…PPRF) and 1115 to 1242 (DRGP…PSWN). Ca(2+) contacts are provided by aspartate 976, aspartate 982, aspartate 1038, aspartate 1040, and aspartate 1046. Disordered stretches follow at residues 1299–1324 (AEEE…PDES) and 1343–1405 (LRQQ…KPKI). Composition is skewed to acidic residues over residues 1314–1324 (EEPEEEEPDES) and 1352–1361 (DLEEKEEVDN). Over residues 1370 to 1383 (KGKEKARAAKEEKK) the composition is skewed to basic and acidic residues. Residues 1387–1396 (QSSGSGQGSE) show a composition bias toward low complexity. C2 domains lie at 1464–1593 (LPED…ATCG) and 1714–1865 (DMPA…KQCT). Ca(2+) contacts are provided by aspartate 1508, aspartate 1514, aspartate 1563, aspartate 1565, aspartate 1571, aspartate 1836, serine 1839, and aspartate 1842. Residues 1964-1984 (WLLLKLLLLLLLLLLLALFLY) traverse the membrane as a helical segment. Topologically, residues 1985 to 1997 (SVPGYLVKKILGA) are extracellular.

This sequence belongs to the ferlin family. In terms of assembly, interacts with SNAP2; the interaction is direct. Interacts with STX1; the interaction is direct. Interacts with RAB8B. The cofactor is Ca(2+). In terms of tissue distribution, isoform 1 and isoform 3 are found in adult brain. Isoform 2 is expressed in the fetus and in adult brain, heart, placenta, skeletal muscle and kidney.

The protein resides in the cytoplasmic vesicle. It is found in the secretory vesicle. It localises to the synaptic vesicle membrane. Its subcellular location is the basolateral cell membrane. The protein localises to the endoplasmic reticulum membrane. The protein resides in the golgi apparatus membrane. It is found in the presynaptic cell membrane. It localises to the cell membrane. Its function is as follows. Key calcium ion sensor involved in the Ca(2+)-triggered synaptic vesicle-plasma membrane fusion and in the control of neurotransmitter release at these output synapses. Interacts in a calcium-dependent manner to the presynaptic SNARE proteins at ribbon synapses of cochlear inner hair cells (IHCs) to trigger exocytosis of neurotransmitter. Also essential to synaptic exocytosis in immature outer hair cells (OHCs). May also play a role within the recycling of endosomes. This chain is Otoferlin (OTOF), found in Homo sapiens (Human).